The sequence spans 619 residues: ESX-2 secretion system protein EccA2 (619 aa).

373–380 contacts ATP; that stretch reads GPPGTGKT.

Belongs to the CbxX/CfxQ family. Part of the ESX-2 / type VII secretion system (T7SS), which is composed of cytosolic and membrane components.

It is found in the cytoplasm. In terms of biological role, part of an ESX-2 / type VII specialized secretion system (T7SS), which exports several proteins. May have ATPase activity and might provide energy for the export of ESX-2 substrates. The chain is ESX-2 secretion system protein EccA2 from Mycobacterium bovis (strain ATCC BAA-935 / AF2122/97).